A 193-amino-acid chain; its full sequence is NADH-quinone oxidoreductase subunit B (193 aa).

[4Fe-4S] cluster is bound by residues cysteine 72, cysteine 73, cysteine 137, and cysteine 167.

It belongs to the complex I 20 kDa subunit family. NDH-1 is composed of 14 different subunits. Subunits NuoB, C, D, E, F, and G constitute the peripheral sector of the complex. Requires [4Fe-4S] cluster as cofactor.

The protein localises to the cell inner membrane. It catalyses the reaction a quinone + NADH + 5 H(+)(in) = a quinol + NAD(+) + 4 H(+)(out). NDH-1 shuttles electrons from NADH, via FMN and iron-sulfur (Fe-S) centers, to quinones in the respiratory chain. Couples the redox reaction to proton translocation (for every two electrons transferred, four hydrogen ions are translocated across the cytoplasmic membrane), and thus conserves the redox energy in a proton gradient. The polypeptide is NADH-quinone oxidoreductase subunit B (Brucella abortus (strain S19)).